The sequence spans 1642 residues: Mitochondrial 3' processome subunit 2 (1642 aa).

A mitochondrion-targeting transit peptide spans 1–27; sequence MGLPFLCHTRVCLFSNKIPFVLCGSRF. 2 disordered regions span residues 43–69 and 745–772; these read ETLN…PQKK and KGEK…LSGP. Polar residues predominate over residues 49-65; the sequence is ELSSPSTSKEPSVGSDS.

As to quaternary structure, component of the mitochondrial 3' processome (MPsome) complex composed at least of terminal uridylyltransferase KRET1/TUT1, 3'-5' exonuclease DSS1, MPSS1, MPSS2 and MPSS3. Within the complex, interacts with DSS1.

The protein localises to the mitochondrion. Its function is as follows. As part of the mitochondrial 3' processome (MPsome), involved in the maturation of guided RNA (gRNA) precursors. In Trypanosoma brucei brucei, this protein is Mitochondrial 3' processome subunit 2.